A 186-amino-acid polypeptide reads, in one-letter code: Peptidyl-tRNA hydrolase (186 aa).

Y14 provides a ligand contact to tRNA. The active-site Proton acceptor is the H19. Y64, N66, and N112 together coordinate tRNA.

Belongs to the PTH family. In terms of assembly, monomer.

It localises to the cytoplasm. It catalyses the reaction an N-acyl-L-alpha-aminoacyl-tRNA + H2O = an N-acyl-L-amino acid + a tRNA + H(+). In terms of biological role, hydrolyzes ribosome-free peptidyl-tRNAs (with 1 or more amino acids incorporated), which drop off the ribosome during protein synthesis, or as a result of ribosome stalling. Functionally, catalyzes the release of premature peptidyl moieties from peptidyl-tRNA molecules trapped in stalled 50S ribosomal subunits, and thus maintains levels of free tRNAs and 50S ribosomes. This chain is Peptidyl-tRNA hydrolase, found in Bacillus cereus (strain ATCC 14579 / DSM 31 / CCUG 7414 / JCM 2152 / NBRC 15305 / NCIMB 9373 / NCTC 2599 / NRRL B-3711).